The following is a 235-amino-acid chain: Phosphoribosylaminoimidazole-succinocarboxamide synthase (235 aa).

This sequence belongs to the SAICAR synthetase family.

The enzyme catalyses 5-amino-1-(5-phospho-D-ribosyl)imidazole-4-carboxylate + L-aspartate + ATP = (2S)-2-[5-amino-1-(5-phospho-beta-D-ribosyl)imidazole-4-carboxamido]succinate + ADP + phosphate + 2 H(+). It participates in purine metabolism; IMP biosynthesis via de novo pathway; 5-amino-1-(5-phospho-D-ribosyl)imidazole-4-carboxamide from 5-amino-1-(5-phospho-D-ribosyl)imidazole-4-carboxylate: step 1/2. The protein is Phosphoribosylaminoimidazole-succinocarboxamide synthase of Clostridium acetobutylicum (strain ATCC 824 / DSM 792 / JCM 1419 / IAM 19013 / LMG 5710 / NBRC 13948 / NRRL B-527 / VKM B-1787 / 2291 / W).